The chain runs to 249 residues: Tetrahydromethanopterin S-methyltransferase subunit D (249 aa).

6 consecutive transmembrane segments (helical) span residues 9–29, 47–67, 75–95, 138–158, 183–203, and 224–244; these read ILWLVFIIIGGVLISWSVHFV, GTVQLAAGAGLTGLVSAGFMM, LILASGAVGAMIMISVTMIVG, VSFVSGVIGGLLGGIGGALVY, LVGIAAMFAIGIFFVNAVIPS, and AVISSFVATILCAIVAVIAIS.

The protein belongs to the MtrD family. As to quaternary structure, the complex is composed of 8 subunits; MtrA, MtrB, MtrC, MtrD, MtrE, MtrF, MtrG and MtrH.

The protein resides in the cell membrane. It catalyses the reaction 5-methyl-5,6,7,8-tetrahydromethanopterin + coenzyme M + 2 Na(+)(in) = 5,6,7,8-tetrahydromethanopterin + methyl-coenzyme M + 2 Na(+)(out). The protein operates within one-carbon metabolism; methanogenesis from CO(2); methyl-coenzyme M from 5,10-methylene-5,6,7,8-tetrahydromethanopterin: step 2/2. Functionally, part of a complex that catalyzes the formation of methyl-coenzyme M and tetrahydromethanopterin from coenzyme M and methyl-tetrahydromethanopterin. This is an energy-conserving, sodium-ion translocating step. In Methanosarcina acetivorans (strain ATCC 35395 / DSM 2834 / JCM 12185 / C2A), this protein is Tetrahydromethanopterin S-methyltransferase subunit D.